A 251-amino-acid polypeptide reads, in one-letter code: 3-deoxy-manno-octulosonate cytidylyltransferase (251 aa).

The protein belongs to the KdsB family.

The protein resides in the cytoplasm. The enzyme catalyses 3-deoxy-alpha-D-manno-oct-2-ulosonate + CTP = CMP-3-deoxy-beta-D-manno-octulosonate + diphosphate. It participates in nucleotide-sugar biosynthesis; CMP-3-deoxy-D-manno-octulosonate biosynthesis; CMP-3-deoxy-D-manno-octulosonate from 3-deoxy-D-manno-octulosonate and CTP: step 1/1. It functions in the pathway bacterial outer membrane biogenesis; lipopolysaccharide biosynthesis. Functionally, activates KDO (a required 8-carbon sugar) for incorporation into bacterial lipopolysaccharide in Gram-negative bacteria. This chain is 3-deoxy-manno-octulosonate cytidylyltransferase, found in Chromobacterium violaceum (strain ATCC 12472 / DSM 30191 / JCM 1249 / CCUG 213 / NBRC 12614 / NCIMB 9131 / NCTC 9757 / MK).